The sequence spans 445 residues: Histamine H3 receptor (445 aa).

Residues 1–40 (MERAPPDGLMNASGALAGEAAAAAGGARTFSAAWTAVLAA) lie on the Extracellular side of the membrane. Residue N11 is glycosylated (N-linked (GlcNAc...) asparagine). A helical transmembrane segment spans residues 41–61 (LMALLIVATVLGNALVMLAFV). Residues 62–71 (ADSSLRTQNN) lie on the Cytoplasmic side of the membrane. A helical membrane pass occupies residues 72–92 (FFLLNLAISDFLVGVFCIPLY). At 93 to 109 (VPYVLTGRWTFGRGLCK) the chain is on the extracellular side. Residues C108 and C189 are joined by a disulfide bond. Residues 110-130 (LWLVVDYLLCTSSVFNIVLIS) form a helical membrane-spanning segment. Topologically, residues 131 to 157 (YDRFLSVTRAVSYRAQQGDTRRAVRKM) are cytoplasmic. A helical membrane pass occupies residues 158-178 (VLVWVLAFLLYGPAILSWEYL). At 179–197 (SGGSSIPEGHCYAEFFYNW) the chain is on the extracellular side. A helical transmembrane segment spans residues 198–218 (YFLITASTLEFFTPFLSVTFF). Topologically, residues 219–359 (NLSIYLNIQR…LSRDKKVAKS (141 aa)) are cytoplasmic. Disordered stretches follow at residues 236-264 (GGAR…WGCW) and 288-336 (AGEA…LEKR). The span at 299 to 312 (AAASPTSSSGSSSR) shows a compositional bias: low complexity. Residues 360 to 380 (LAIIVSIFGLCWAPYTLLMII) form a helical membrane-spanning segment. Residues 381 to 398 (RAACHGHCVPDYWYETSF) lie on the Extracellular side of the membrane. A helical transmembrane segment spans residues 399-419 (WLLWANSAVNPVLYPLCHYSF). The Cytoplasmic segment spans residues 420 to 445 (RRAFTKLLCPQKLKVQPHSSLEHCWK). Position 439 is a phosphoserine (S439).

The protein belongs to the G-protein coupled receptor 1 family. As to expression, expressed widely and abundantly throughout the brain. Highly expressed in discrete neuronal populations such as pyramidal cells in cerebral cortex or cerebellar Purkinje cells.

The protein resides in the cell membrane. Its function is as follows. The H3 subclass of histamine receptors could mediate the histamine signals in CNS and peripheral nervous system. Signals through the inhibition of adenylate cyclase and displays high constitutive activity (spontaneous activity in the absence of agonist). This chain is Histamine H3 receptor (HRH3), found in Cavia porcellus (Guinea pig).